Consider the following 368-residue polypeptide: Heme A synthase (368 aa).

The next 5 membrane-spanning stretches (helical) occupy residues Ala-14–Gly-34, Val-104–Pro-124, Ala-129–Ala-149, Val-161–Leu-181, and Ala-200–Leu-220. Heme is bound at residue His-264. 3 consecutive transmembrane segments (helical) span residues Met-266 to Leu-283, Phe-296 to Ile-316, and Leu-318 to Glu-338. Position 322 (His-322) interacts with heme.

Belongs to the COX15/CtaA family. Type 2 subfamily. Interacts with CtaB. It depends on heme b as a cofactor.

The protein localises to the cell membrane. The enzyme catalyses Fe(II)-heme o + 2 A + H2O = Fe(II)-heme a + 2 AH2. Its pathway is porphyrin-containing compound metabolism; heme A biosynthesis; heme A from heme O: step 1/1. Functionally, catalyzes the conversion of heme O to heme A by two successive hydroxylations of the methyl group at C8. The first hydroxylation forms heme I, the second hydroxylation results in an unstable dihydroxymethyl group, which spontaneously dehydrates, resulting in the formyl group of heme A. In Rhodopseudomonas palustris (strain ATCC BAA-98 / CGA009), this protein is Heme A synthase.